Reading from the N-terminus, the 503-residue chain is ATP synthase subunit alpha (503 aa).

An ATP-binding site is contributed by 170-177; the sequence is GDRKTGKT.

The protein belongs to the ATPase alpha/beta chains family. F-type ATPases have 2 components, CF(1) - the catalytic core - and CF(0) - the membrane proton channel. CF(1) has five subunits: alpha(3), beta(3), gamma(1), delta(1), epsilon(1). CF(0) has four main subunits: a(1), b(1), b'(1) and c(9-12).

It is found in the cellular thylakoid membrane. The enzyme catalyses ATP + H2O + 4 H(+)(in) = ADP + phosphate + 5 H(+)(out). Functionally, produces ATP from ADP in the presence of a proton gradient across the membrane. The alpha chain is a regulatory subunit. The sequence is that of ATP synthase subunit alpha from Synechocystis sp. (strain ATCC 27184 / PCC 6803 / Kazusa).